Consider the following 343-residue polypeptide: N-acetyl-gamma-glutamyl-phosphate reductase (343 aa).

The active site involves Cys-147.

It belongs to the NAGSA dehydrogenase family. Type 1 subfamily.

The protein resides in the cytoplasm. The catalysed reaction is N-acetyl-L-glutamate 5-semialdehyde + phosphate + NADP(+) = N-acetyl-L-glutamyl 5-phosphate + NADPH + H(+). It functions in the pathway amino-acid biosynthesis; L-arginine biosynthesis; N(2)-acetyl-L-ornithine from L-glutamate: step 3/4. Its function is as follows. Catalyzes the NADPH-dependent reduction of N-acetyl-5-glutamyl phosphate to yield N-acetyl-L-glutamate 5-semialdehyde. This is N-acetyl-gamma-glutamyl-phosphate reductase from Staphylococcus saprophyticus subsp. saprophyticus (strain ATCC 15305 / DSM 20229 / NCIMB 8711 / NCTC 7292 / S-41).